Reading from the N-terminus, the 940-residue chain is Valine--tRNA ligase (940 aa).

The 'HIGH' region signature appears at 47–57; the sequence is PNVTGILHMGH. The 'KMSKS' region motif lies at 564 to 568; that stretch reads KLSKS. Lys567 provides a ligand contact to ATP. Residues 872–938 are a coiled coil; that stretch reads PIEQITKEKN…LQSILDKLAS (67 aa).

The protein belongs to the class-I aminoacyl-tRNA synthetase family. ValS type 1 subfamily. Monomer.

It localises to the cytoplasm. The catalysed reaction is tRNA(Val) + L-valine + ATP = L-valyl-tRNA(Val) + AMP + diphosphate. Its function is as follows. Catalyzes the attachment of valine to tRNA(Val). As ValRS can inadvertently accommodate and process structurally similar amino acids such as threonine, to avoid such errors, it has a 'posttransfer' editing activity that hydrolyzes mischarged Thr-tRNA(Val) in a tRNA-dependent manner. This chain is Valine--tRNA ligase, found in Chlamydia felis (strain Fe/C-56) (Chlamydophila felis).